Here is a 265-residue protein sequence, read N- to C-terminus: Imidazole glycerol phosphate synthase subunit HisF (265 aa).

Active-site residues include aspartate 11 and aspartate 130.

It belongs to the HisA/HisF family. In terms of assembly, heterodimer of HisH and HisF.

The protein localises to the cytoplasm. It catalyses the reaction 5-[(5-phospho-1-deoxy-D-ribulos-1-ylimino)methylamino]-1-(5-phospho-beta-D-ribosyl)imidazole-4-carboxamide + L-glutamine = D-erythro-1-(imidazol-4-yl)glycerol 3-phosphate + 5-amino-1-(5-phospho-beta-D-ribosyl)imidazole-4-carboxamide + L-glutamate + H(+). It functions in the pathway amino-acid biosynthesis; L-histidine biosynthesis; L-histidine from 5-phospho-alpha-D-ribose 1-diphosphate: step 5/9. In terms of biological role, IGPS catalyzes the conversion of PRFAR and glutamine to IGP, AICAR and glutamate. The HisF subunit catalyzes the cyclization activity that produces IGP and AICAR from PRFAR using the ammonia provided by the HisH subunit. The protein is Imidazole glycerol phosphate synthase subunit HisF of Idiomarina loihiensis (strain ATCC BAA-735 / DSM 15497 / L2-TR).